Here is a 279-residue protein sequence, read N- to C-terminus: Lipid phosphate phosphatase epsilon 1, chloroplastic (279 aa).

Residues 1 to 88 (MAASSSLLLL…SFINNSSEIR (88 aa)) constitute a chloroplast transit peptide. A run of 5 helical transmembrane segments spans residues 126–142 (LWAV…SVVL), 164–184 (SHAQ…MEWL), 185–205 (GTNG…SYFI), 219–239 (VVVG…MWNS), and 255–275 (VFLF…LNWF).

This sequence belongs to the PA-phosphatase related phosphoesterase family. In terms of tissue distribution, expressed in root tips, root branch points, cotyledons and leaves.

It is found in the plastid. The protein resides in the chloroplast inner membrane. Its activity is regulated as follows. Inhibited by Mg(2+). In terms of biological role, exhibits phosphatidate phosphatase (PAP) activity in vitro. May play a secondary role as PAP in plastids. The polypeptide is Lipid phosphate phosphatase epsilon 1, chloroplastic (LPPE1) (Arabidopsis thaliana (Mouse-ear cress)).